Here is a 351-residue protein sequence, read N- to C-terminus: Nuclear inhibitor of protein phosphatase 1 (351 aa).

An interaction with CDC5L, SF3B1 and MELK region spans residues Met-1 to Lys-142. Positions Tyr-49 to Leu-101 constitute an FHA domain. The interval Met-143 to Asn-224 is interaction with EED. Thr-161 is modified (phosphothreonine; by CK2; in vitro). A Phosphoserine; by PKA; in vitro modification is found at Ser-178. Short sequence motifs (nuclear localization signal) lie at residues Gly-185–Ile-209 and Ile-210–Gly-240. The interval Arg-191 to Arg-200 is involved in PP-1 inhibition. Ser-199 is modified (phosphoserine). Positions Arg-200–Phe-203 are involved in PP-1 binding. The residue at position 204 (Ser-204) is a Phosphoserine. Ser-249 is modified (phosphoserine). Tyr-264 carries the post-translational modification Phosphotyrosine. The segment at Ala-310–Glu-329 is interaction with EED. A disordered region spans residues Ala-316–Ile-351. The segment at Pro-330–Ile-351 is RNA-binding. An involved in PP-1 inhibition region spans residues Lys-331–Lys-337. A Phosphotyrosine modification is found at Tyr-335.

In terms of assembly, interacts with phosphorylated CDC5L, SF3B1 and MELK. Interacts with EED. Part of a complex consisting of PPP1R8, EED, HDAC2 and PP-1. Part of the spliceosome. Interacts with PPP1CA, PPP1CB and PPP1CC. The N-terminus is blocked. In terms of processing, inactivated by phosphorylation on Ser-199 or Ser-204.

The protein resides in the nucleus. It localises to the nucleus speckle. Functionally, inhibitor subunit of the major nuclear protein phosphatase-1 (PP-1). It has RNA-binding activity but does not cleave RNA and may target PP-1 to RNA-associated substrates. May also be involved in pre-mRNA splicing. Binds DNA and might act as a transcriptional repressor. Seems to be required for cell proliferation. This chain is Nuclear inhibitor of protein phosphatase 1 (PPP1R8), found in Bos taurus (Bovine).